The primary structure comprises 492 residues: KRAB-A domain-containing protein 2 (492 aa).

In terms of domain architecture, KRAB spans 36 to 117 (LFQEATAFEN…MREKFLMSVT (82 aa)). S115 is modified (phosphoserine). Residue T117 is modified to Phosphothreonine. The Integrase catalytic domain occupies 247-415 (RGLAPKPMTF…SPFEAMFGYK (169 aa)). The stretch at 427–457 (RETVATLQTEEELEIAEEQLENSLWIRQEER) forms a coiled coil. The segment covering 455 to 465 (EERAEIGADRS) has biased composition (basic and acidic residues). Positions 455–492 (EERAEIGADRSDMDDDMDPTPEASEPSTSQGTSGLLCW) are disordered. The span at 479–492 (EPSTSQGTSGLLCW) shows a compositional bias: polar residues.

The sequence is that of KRAB-A domain-containing protein 2 (KRBA2) from Homo sapiens (Human).